A 140-amino-acid polypeptide reads, in one-letter code: Nucleoside diphosphate kinase (140 aa).

ATP is bound by residues K11, F59, R87, T93, R104, and N114. Residue H117 is the Pros-phosphohistidine intermediate of the active site.

This sequence belongs to the NDK family. Homotetramer. The cofactor is Mg(2+).

The protein resides in the cytoplasm. The catalysed reaction is a 2'-deoxyribonucleoside 5'-diphosphate + ATP = a 2'-deoxyribonucleoside 5'-triphosphate + ADP. The enzyme catalyses a ribonucleoside 5'-diphosphate + ATP = a ribonucleoside 5'-triphosphate + ADP. Major role in the synthesis of nucleoside triphosphates other than ATP. The ATP gamma phosphate is transferred to the NDP beta phosphate via a ping-pong mechanism, using a phosphorylated active-site intermediate. The sequence is that of Nucleoside diphosphate kinase from Sphingopyxis alaskensis (strain DSM 13593 / LMG 18877 / RB2256) (Sphingomonas alaskensis).